The following is a 134-amino-acid chain: Ribonuclease VapC1 (134 aa).

Residues 4–123 (IIDTSIIIAL…LNVKDFKRIQ (120 aa)) enclose the PINc domain. Residues D6 and D97 each contribute to the Mg(2+) site.

The protein belongs to the PINc/VapC protein family. Mg(2+) serves as cofactor.

In terms of biological role, toxic component of a type II toxin-antitoxin (TA) system. Has ssRNase activity. Upon expression in E.coli inhibits growth in liquid culture; this toxic effect is neutralized by coexpression with cognate antitoxin VapB1. Its RNase activity is partially inhibited in vitro by VapB1. In Rickettsia felis (strain ATCC VR-1525 / URRWXCal2) (Rickettsia azadi), this protein is Ribonuclease VapC1.